The sequence spans 608 residues: UvrABC system protein C (608 aa).

Positions 13–91 (HDPGVYRMFD…IKTFQPRYNV (79 aa)) constitute a GIY-YIG domain. Positions 201-236 (QQVLDHLIAKMETASRALDFENAARFRDQIQAVRAV) constitute a UVR domain.

Belongs to the UvrC family. As to quaternary structure, interacts with UvrB in an incision complex.

The protein resides in the cytoplasm. Its function is as follows. The UvrABC repair system catalyzes the recognition and processing of DNA lesions. UvrC both incises the 5' and 3' sides of the lesion. The N-terminal half is responsible for the 3' incision and the C-terminal half is responsible for the 5' incision. The polypeptide is UvrABC system protein C (Actinobacillus succinogenes (strain ATCC 55618 / DSM 22257 / CCUG 43843 / 130Z)).